Reading from the N-terminus, the 297-residue chain is MSKIFVNPSAIRAGLADLEMAEETVDLVNKNVEESQAHLQAEPIEVDALPEDMKRLQISEPKPCQLPDGTCMKEEGGDEDFYMAESGDPYIPLQSYLDTMGIQIVRKMKTGERFFKIWSQSVEEIISYVAVNFPVPPGKSLADKSTQTSVEKSKPASQPTQPKKEDQLSKVNIDSQESSGPPALDWAATNDDDDASVEAEIAHQIAESFSKKYKFPSRSSGIFLYNFEQLKMNLDDIVREAKGIPGVTRRAGDGVRLPLRCILGWVASTHSRRFQLLVNSDKLNKVMQDDINRYLAY.

A Nuclear export signal motif is present at residues 49-58 (LPEDMKRLQI). The segment at 138–172 (GKSLADKSTQTSVEKSKPASQPTQPKKEDQLSKVN) is DYNLL1 and DYNLL2 binding. Residues 140–189 (SLADKSTQTSVEKSKPASQPTQPKKEDQLSKVNIDSQESSGPPALDWAAT) form a disordered region. Composition is skewed to polar residues over residues 143–161 (DKST…QPTQ) and 169–179 (SKVNIDSQESS). Residue Ser210 is modified to Phosphoserine; by host PKC. Positions 211 to 214 (KKYK) match the Nuclear localization signal motif. Ser271 is subject to Phosphoserine; by host PKC.

This sequence belongs to the lyssavirus protein P family. As to quaternary structure, homotrimer when phosphorylated. This trimer is stabilized by binding to the L protein. Binds soluble protein N, and ribonucleocapsid. Interacts with host STAT1, STAT2 and PML. Phosphorylated by host PKC and by an unknown kinase.

The protein resides in the virion. The protein localises to the host cytoplasm. It localises to the host nucleus. Non catalytic polymerase cofactor and regulatory protein that plays a role in viral transcription and replication. Stabilizes the RNA polymerase L to the N-RNA template and binds the soluble protein N, preventing it from encapsidating non-genomic RNA. Also inhibits host IFN-alpha and IFN-beta signaling by binding and retaining phosphorylated STAT1 in the cytoplasm or by inhibiting the DNA binding of STAT1 in the nucleus. This is Phosphoprotein (P) from Myotis blythii (Lesser mouse-eared bat).